Here is a 276-residue protein sequence, read N- to C-terminus: Replication protein A 32 kDa subunit-A (276 aa).

Residues 19-31 (GGGGYMQSPGGFG) are compositionally biased toward gly residues. A disordered region spans residues 19–47 (GGGGYMQSPGGFGSPAPTQGEKKSRSRSQ). Positions 77 to 151 (VTIVGIVRHA…KSVVAFKIAP (75 aa)) form a DNA-binding region, OB.

This sequence belongs to the replication factor A protein 2 family. Component of the replication protein A complex (RPA/RP-A), a heterotrimeric complex composed of RPA1, RPA2 and RPA3. Differentially phosphorylated throughout the cell cycle, becoming phosphorylated at the G1-S transition and dephosphorylated in late mitosis. Phosphorylation increases upon replication fork stalling.

Its subcellular location is the nucleus. The protein resides in the PML body. Functionally, as part of the heterotrimeric replication protein A complex (RPA/RP-A), binds and stabilizes single-stranded DNA intermediates, that form during DNA replication or upon DNA stress. It prevents their reannealing and in parallel, recruits and activates different proteins and complexes involved in DNA metabolism. Thereby, it plays an essential role both in DNA replication and the cellular response to DNA damage. This chain is Replication protein A 32 kDa subunit-A (rpa2-a), found in Xenopus laevis (African clawed frog).